The following is an 85-amino-acid chain: RNA-binding protein Hfq (85 aa).

A Sm domain is found at 9–68 (DPFLNALRRERIPVSIYLVNGIKLQGQVESFDQFVILLKNTVSQMVYKHAISTVVPARPV).

It belongs to the Hfq family. Homohexamer.

Its function is as follows. RNA chaperone that binds small regulatory RNA (sRNAs) and mRNAs to facilitate mRNA translational regulation in response to envelope stress, environmental stress and changes in metabolite concentrations. Also binds with high specificity to tRNAs. The protein is RNA-binding protein Hfq of Tolumonas auensis (strain DSM 9187 / NBRC 110442 / TA 4).